We begin with the raw amino-acid sequence, 247 residues long: tRNA uridine(34) hydroxylase (247 aa).

A Rhodanese domain is found at 124–218 (TKQNVIVIDT…YLEDTQNKNN (95 aa)). The Cysteine persulfide intermediate role is filled by C178.

It belongs to the TrhO family.

The enzyme catalyses uridine(34) in tRNA + AH2 + O2 = 5-hydroxyuridine(34) in tRNA + A + H2O. Its function is as follows. Catalyzes oxygen-dependent 5-hydroxyuridine (ho5U) modification at position 34 in tRNAs. In Rickettsia akari (strain Hartford), this protein is tRNA uridine(34) hydroxylase.